Here is an 860-residue protein sequence, read N- to C-terminus: Alanine--tRNA ligase (860 aa).

Zn(2+) is bound by residues H563, H567, C665, and H669.

Belongs to the class-II aminoacyl-tRNA synthetase family. It depends on Zn(2+) as a cofactor.

It is found in the cytoplasm. The enzyme catalyses tRNA(Ala) + L-alanine + ATP = L-alanyl-tRNA(Ala) + AMP + diphosphate. Its function is as follows. Catalyzes the attachment of alanine to tRNA(Ala) in a two-step reaction: alanine is first activated by ATP to form Ala-AMP and then transferred to the acceptor end of tRNA(Ala). Also edits incorrectly charged Ser-tRNA(Ala) and Gly-tRNA(Ala) via its editing domain. The sequence is that of Alanine--tRNA ligase from Vibrio cholerae serotype O1 (strain ATCC 39315 / El Tor Inaba N16961).